The following is a 534-amino-acid chain: Cytokinin dehydrogenase 5 (534 aa).

Residues 1-20 (MAWCLVFMVFLIYCLISTVG) form the signal peptide. Residues 59 to 243 (TSAEPLAVFH…TRARIALEPA (185 aa)) form the FAD-binding PCMH-type domain. The FAD site is built by alanine 93, glycine 95, and glycine 97. Position 98 is a pros-8alpha-FAD histidine (histidine 98). FAD contacts are provided by serine 99 and glutamine 103. Asparagine 152 carries N-linked (GlcNAc...) asparagine glycosylation. FAD-binding residues include aspartate 167, serine 172, serine 178, isoleucine 182, and isoleucine 233. Asparagine 256 carries N-linked (GlcNAc...) asparagine glycosylation. Residues tyrosine 484 and glutamine 522 each contribute to the FAD site.

This sequence belongs to the oxygen-dependent FAD-linked oxidoreductase family. As to quaternary structure, monomer. The cofactor is FAD. Expressed in inflorescence meristems.

It localises to the secreted. The protein resides in the extracellular space. The catalysed reaction is N(6)-dimethylallyladenine + A + H2O = 3-methyl-2-butenal + adenine + AH2. Its function is as follows. Catalyzes the oxidation of cytokinins, a family of N(6)-substituted adenine derivatives that are plant hormones, where the substituent is an isopentenyl group. The sequence is that of Cytokinin dehydrogenase 5 (CKX5) from Oryza sativa subsp. japonica (Rice).